We begin with the raw amino-acid sequence, 345 residues long: S-adenosylmethionine:tRNA ribosyltransferase-isomerase (345 aa).

The protein belongs to the QueA family. Monomer.

It localises to the cytoplasm. It carries out the reaction 7-aminomethyl-7-carbaguanosine(34) in tRNA + S-adenosyl-L-methionine = epoxyqueuosine(34) in tRNA + adenine + L-methionine + 2 H(+). It functions in the pathway tRNA modification; tRNA-queuosine biosynthesis. In terms of biological role, transfers and isomerizes the ribose moiety from AdoMet to the 7-aminomethyl group of 7-deazaguanine (preQ1-tRNA) to give epoxyqueuosine (oQ-tRNA). In Anaeromyxobacter sp. (strain Fw109-5), this protein is S-adenosylmethionine:tRNA ribosyltransferase-isomerase.